We begin with the raw amino-acid sequence, 535 residues long: PAC-1 interacting and coiled-coil domain-containing protein 1 (535 aa).

Residues 1-67 (MIITTPRRAN…KQTPPRSPVI (67 aa)) are disordered. Low complexity predominate over residues 36 to 57 (SSTTPSSIGSSSSSSSSYASST). Coiled-coil stretches lie at residues 109–172 (KLQY…RDLS) and 198–242 (SLMK…RQSL). 2 disordered regions span residues 254–277 (NESE…NDEE) and 503–535 (TCRP…HTHN). The segment covering 503 to 525 (TCRPTTTLISSTQPAQRSVSVEK) has biased composition (polar residues). The segment covering 526-535 (NNNNNVHTHN) has biased composition (low complexity).

It belongs to the CCDC85 family. In terms of assembly, interacts with pac-1 and jac-1.

Its subcellular location is the cell junction. It is found in the adherens junction. Its function is as follows. Linker protein which helps to recruit the Rho GTPase-activating protein, pac-1, to adherens junctions. The polypeptide is PAC-1 interacting and coiled-coil domain-containing protein 1 (Caenorhabditis elegans).